The chain runs to 307 residues: Serine/threonine-protein phosphatase 4 catalytic subunit (307 aa).

Ala2 carries the N-acetylalanine modification. 4 residues coordinate Mn(2+): Asp54, His56, Asp82, and Asn114. Catalysis depends on His115, which acts as the Proton donor. Mn(2+) is bound by residues His164 and His238. Residue Leu307 is modified to Leucine methyl ester.

This sequence belongs to the PPP phosphatase family. PP-4 (PP-X) subfamily. Serine/threonine-protein phosphatase 4 (PP4) occurs in different assemblies of the catalytic and one or more regulatory subunits. Component of the PP4 complexes PPP4C-PPP4R1, PPP4C-PPP4R2, PPP4C-PPP4R2-PPP4R3A, PPP4C-PPP4R2-PPP4R3B and PPP4C-PPP4R4. The PPP4C-PPP4R2 complex appears to be a tetramer composed of 2 molecules of PPP4C and 2 molecules of PPP4R2. Interacts with REL, NFKB1/p50 and RELA. Interacts with SMN1 and GEMIN4. Interacts with IRS4 (phosphorylated). Interacts with SMEK1/PPP4R3A; the interaction requires PP4R2. Interacts with HDAC3. Requires Mn(2+) as cofactor. In terms of processing, methylation at the C-terminal Leu-307 is critical for interactions with regulatory subunits and functions in DNA repair.

The protein localises to the cytoplasm. It is found in the nucleus. The protein resides in the cytoskeleton. It localises to the microtubule organizing center. Its subcellular location is the centrosome. The catalysed reaction is O-phospho-L-seryl-[protein] + H2O = L-seryl-[protein] + phosphate. It catalyses the reaction O-phospho-L-threonyl-[protein] + H2O = L-threonyl-[protein] + phosphate. Functionally, protein phosphatase that is involved in many processes such as microtubule organization at centrosomes, maturation of spliceosomal snRNPs, apoptosis, DNA repair, tumor necrosis factor (TNF)-alpha signaling, activation of c-Jun N-terminal kinase MAPK8, regulation of histone acetylation, DNA damage checkpoint signaling, NF-kappa-B activation and cell migration. The PPP4C-PPP4R1 PP4 complex may play a role in dephosphorylation and regulation of HDAC3. The PPP4C-PPP4R2-PPP4R3A PP4 complex specifically dephosphorylates H2AX phosphorylated on Ser-140 (gamma-H2AX) generated during DNA replication and required for DNA double strand break repair. Dephosphorylates NDEL1 at CDK1 phosphorylation sites and negatively regulates CDK1 activity in interphase. In response to DNA damage, catalyzes RPA2 dephosphorylation, an essential step for DNA repair since it allows the efficient RPA2-mediated recruitment of RAD51 to chromatin. The protein is Serine/threonine-protein phosphatase 4 catalytic subunit (PPP4C) of Homo sapiens (Human).